Here is a 238-residue protein sequence, read N- to C-terminus: Survival of motor neuron-related-splicing factor 30 (238 aa).

A Tudor domain is found at 72 to 132 (SWKVGDKCMA…KPVEEGRKAK (61 aa)). Residues 142–160 (KKEMIAQQREYKKKKALKK) carry the Nuclear localization signal motif. Phosphoserine is present on Ser201. At Lys219 the chain carries N6-acetyllysine.

This sequence belongs to the SMN family. Associates with spliceosomes. Associates with U4/U5/U6 tri-snRNP and with U2 snRNP.

It is found in the nucleus speckle. It localises to the nucleus. The protein localises to the cajal body. Its function is as follows. Involved in spliceosome assembly. The polypeptide is Survival of motor neuron-related-splicing factor 30 (SMNDC1) (Pongo abelii (Sumatran orangutan)).